We begin with the raw amino-acid sequence, 274 residues long: 2,3,4,5-tetrahydropyridine-2,6-dicarboxylate N-succinyltransferase (274 aa).

The substrate site is built by Arg-103 and Asp-140.

It belongs to the transferase hexapeptide repeat family. Homotrimer.

The protein resides in the cytoplasm. The enzyme catalyses (S)-2,3,4,5-tetrahydrodipicolinate + succinyl-CoA + H2O = (S)-2-succinylamino-6-oxoheptanedioate + CoA. Its pathway is amino-acid biosynthesis; L-lysine biosynthesis via DAP pathway; LL-2,6-diaminopimelate from (S)-tetrahydrodipicolinate (succinylase route): step 1/3. This chain is 2,3,4,5-tetrahydropyridine-2,6-dicarboxylate N-succinyltransferase, found in Actinobacillus pleuropneumoniae serotype 5b (strain L20).